The chain runs to 91 residues: Large ribosomal subunit protein bL27 (91 aa).

The segment at 1-22 (MAHKKAGGSSRNGRDSDGRRLG) is disordered.

The protein belongs to the bacterial ribosomal protein bL27 family.

The sequence is that of Large ribosomal subunit protein bL27 from Beijerinckia indica subsp. indica (strain ATCC 9039 / DSM 1715 / NCIMB 8712).